The sequence spans 121 residues: Large ribosomal subunit protein bL12 (121 aa).

The protein belongs to the bacterial ribosomal protein bL12 family. In terms of assembly, homodimer. Part of the ribosomal stalk of the 50S ribosomal subunit. Forms a multimeric L10(L12)X complex, where L10 forms an elongated spine to which 2 to 4 L12 dimers bind in a sequential fashion. Binds GTP-bound translation factors.

Forms part of the ribosomal stalk which helps the ribosome interact with GTP-bound translation factors. Is thus essential for accurate translation. The chain is Large ribosomal subunit protein bL12 from Lachnospira eligens (strain ATCC 27750 / DSM 3376 / VPI C15-48 / C15-B4) (Eubacterium eligens).